A 546-amino-acid chain; its full sequence is Crossover junction endonuclease EME1A (546 aa).

2 disordered regions span residues 1–55 and 88–232; these read MSDF…FLDE and VISL…REKQ. The span at 28-49 shows a compositional bias: polar residues; that stretch reads PTDLNLDTEPSLQKQPPGSAST. 2 stretches are compositionally biased toward basic and acidic residues: residues 103–120 and 149–167; these read SSKK…KPCR and DAIE…VEKM. Positions 173 to 183 are enriched in polar residues; the sequence is TITSKSTSLSA. Residues 188 to 245 adopt a coiled-coil conformation; it reads KKKMSKDEKTRAAEEKKLQKEQEKLQKAASKAEDAEHKKLEREKQKWAKEKDKALKCI. Basic and acidic residues predominate over residues 192 to 232; that stretch reads SKDEKTRAAEEKKLQKEQEKLQKAASKAEDAEHKKLEREKQ. Residues 278 to 478 form the ERCC4 domain; it reads NPIQRSIVWT…PSLKSLLKVY (201 aa).

The protein belongs to the EME1/MMS4 family. In terms of assembly, forms a heterodimer with MUS81. Mg(2+) is required as a cofactor. It depends on Ca(2+) as a cofactor.

It localises to the nucleus. Interacts with MUS81 to form a DNA structure-specific endonuclease with substrate preference for branched DNA structures with a 5'-end at the branch nick. Typical substrates include 3'-flap structures, D-loops, replication forks, nicked Holliday junctions and also intact Holliday junctions with a reduced efficiency. May be required in mitosis for the processing of stalled or collapsed replication fork intermediates. Plays a role in DNA repair and in genotoxic stress-induced homologous recombination (HR) in somatic cells. Mediates a subset of meiotic recombination events that are insensitive to crossover interference. The polypeptide is Crossover junction endonuclease EME1A (EME1A) (Arabidopsis thaliana (Mouse-ear cress)).